A 440-amino-acid polypeptide reads, in one-letter code: D-serine dehydratase (440 aa).

Lysine 116 bears the N6-(pyridoxal phosphate)lysine mark.

It belongs to the serine/threonine dehydratase family. DsdA subfamily. As to quaternary structure, monomer. The cofactor is pyridoxal 5'-phosphate.

It catalyses the reaction D-serine = pyruvate + NH4(+). In Salmonella typhi, this protein is D-serine dehydratase.